Reading from the N-terminus, the 215-residue chain is Putative B3 domain-containing protein Os11g0625400 (215 aa).

Positions 1-51 (MTVELEKIAGSFFISKGWKTFVHRTGLLSGQYIRFQVLTPSKINVLLFDKK) form a DNA-binding region, TF-B3 1. The tract at residues 92-117 (SHTSNKETSSDSRTESMTDIPSSSDN) is disordered. Residues 95–107 (SNKETSSDSRTES) show a composition bias toward basic and acidic residues. A compositionally biased stretch (polar residues) spans 108-117 (MTDIPSSSDN). The segment at residues 123–215 (DIKNYISIIG…PNVKITIDVL (93 aa)) is a DNA-binding region (TF-B3 2).

Its subcellular location is the nucleus. The protein is Putative B3 domain-containing protein Os11g0625400 of Oryza sativa subsp. japonica (Rice).